The following is a 78-amino-acid chain: Molt-inhibiting hormone (78 aa).

Intrachain disulfides connect cysteine 7-cysteine 44, cysteine 24-cysteine 40, and cysteine 27-cysteine 53.

It is found in the secreted. Functionally, inhibits Y-organs where molting hormone (ecdysteroid) is secreted. A molting cycle is initiated when MIH secretion diminishes or stops. Also has significant hyperglycemic hormone (CHH) activity. The sequence is that of Molt-inhibiting hormone from Cancer pagurus (Rock crab).